The primary structure comprises 424 residues: S-phase kinase-associated protein 2 (424 aa).

The disordered stretch occupies residues 52-73 (PHGLLSNLGHPQSPPRKRVKGK). At Ser-64 the chain carries Phosphoserine. A Nuclear localization signal motif is present at residues 67–73 (RKRVKGK). 2 positions are modified to N6-acetyllysine; by p300/EP300: Lys-68 and Lys-71. Position 75 is a phosphoserine (Ser-75). Residues 94-140 (GVSWDSLPDELLLGIFSCLCLPELLRVSGVCKRWYRLSLDESLWQSL) enclose the F-box domain. 10 LRR repeats span residues 151–176 (VTVR…PLGE), 177–204 (SFSS…ILSE), 210–234 (NLSL…NLVR), 235–257 (LNLC…SCSR), 258–284 (LDEL…LPNT), 286–308 (TQLN…IIKR), 309–330 (CPNL…CFPE), 334–356 (LNYL…LLEL), 359–378 (IPTL…TLQL), and 380–401 (REAL…RPTM). Ser-179 carries the phosphoserine modification.

Part of a SCF(SKP2) complex consisting of CUL1, RBX1, SKP1 and SKP2. Component of a SCF(SKP2)-like complex containing CUL1, SKP1, TRIM21 and SKP2. Interacts directly with CUL1 and SKP1. Interacts with ASB2 which is the substrate-recognition component of a probable ECS E3 ubiquitin-protein ligase complex; ASB2 is likely to bridge the formation of dimeric E3-ubiquitin-protein ligase complexes composed of an ECS complex and an SCF(SKP2) complex. Interacts with CKS1. Interacts with the cyclin-A-CDK2 complex. Interacts with ORC1, phosphorylated CDT1, phosphorylated RBL2, ELF4, phosphorylated RAG2, FOXO1, UBP43, MYC, TOB1, TAL1 and KMT2A/MLL1. Interacts with TRIM21. Interacts with cyclin-E. Interacts with CARM1. In terms of processing, phosphorylated on serine and threonine resudues in response to DNA damage, promoting 'Lys-63'-linked ubiquitination of NBN. Ubiquitinated by the APC/C complex, leading to its degradation by the proteasome. Deubiquitinated by USP13. Post-translationally, acetylation at Lys-68 and Lys-71 increases stability through impairment of APC/C-mediated proteolysis and promotes cytoplasmic retention. Deacetylated by SIRT3.

It localises to the cytoplasm. The protein localises to the nucleus. Its pathway is protein modification; protein ubiquitination. In terms of biological role, substrate recognition component of a SCF (SKP1-CUL1-F-box protein) E3 ubiquitin-protein ligase complex which mediates the ubiquitination and subsequent proteasomal degradation of target proteins involved in cell cycle progression, signal transduction and transcription. Specifically recognizes phosphorylated CDKN1B/p27kip and is involved in regulation of G1/S transition. Degradation of CDKN1B/p27kip also requires CKS1. Recognizes target proteins ORC1, CDT1, RBL2, KMT2A/MLL1, CDK9, RAG2, NBN, FOXO1, UBP43, YTHDF2, and probably MYC, TOB1 and TAL1. Degradation of TAL1 also requires STUB1. Recognizes CDKN1A in association with CCNE1 or CCNE2 and CDK2. Promotes ubiquitination and destruction of CDH1 in a CK1-dependent manner, thereby regulating cell migration. Following phosphorylation in response to DNA damage, mediates 'Lys-63'-linked ubiquitination of NBN, promoting ATM recruitment to DNA damage sites and DNA repair via homologous recombination. Its function is as follows. Through the ubiquitin-mediated proteasomal degradation of viral proteins may have an antiviral activity. This chain is S-phase kinase-associated protein 2 (Skp2), found in Mus musculus (Mouse).